We begin with the raw amino-acid sequence, 61 residues long: Small ribosomal subunit protein uS14C (61 aa).

Zn(2+)-binding residues include Cys-24, Cys-27, Cys-40, and Cys-43.

Belongs to the universal ribosomal protein uS14 family. Zinc-binding uS14 subfamily. Part of the 30S ribosomal subunit. Contacts proteins S3 and S10. Zn(2+) serves as cofactor.

Binds 16S rRNA, required for the assembly of 30S particles and may also be responsible for determining the conformation of the 16S rRNA at the A site. The sequence is that of Small ribosomal subunit protein uS14C from Bacillus licheniformis (strain ATCC 14580 / DSM 13 / JCM 2505 / CCUG 7422 / NBRC 12200 / NCIMB 9375 / NCTC 10341 / NRRL NRS-1264 / Gibson 46).